A 781-amino-acid polypeptide reads, in one-letter code: Tax1-binding protein 1 homolog A (781 aa).

Coiled-coil stretches lie at residues 148–453 (NSDI…QGDA) and 488–581 (DVEK…YMRE). Residues 441–465 (KLTQQQETQQGDANRNDASTETTLE) are compositionally biased toward polar residues. Disordered stretches follow at residues 441 to 510 (KLTQ…EEEC) and 630 to 691 (ETRD…EAPA). A compositionally biased stretch (basic and acidic residues) spans 484-495 (TVARDVEKSRDE). Residues 496–510 (EGNEQEEEDEEEEEC) show a composition bias toward acidic residues. Positions 646–656 (RPPPLAPPPWG) are enriched in pro residues. 2 UBZ1-type zinc fingers span residues 716-742 (HKQC…VESH) and 743-769 (WRVC…VHTH). Cys-719, Cys-722, His-738, His-742, Cys-746, Cys-749, His-765, and His-769 together coordinate Zn(2+).

In terms of tissue distribution, little expression is observed during pectoral fin development, except for an elevated level of expression in the distal mesenchyme cells of some samples.

In terms of biological role, may have anti-apoptotic activity. The protein is Tax1-binding protein 1 homolog A of Danio rerio (Zebrafish).